Here is a 425-residue protein sequence, read N- to C-terminus: Calreticulin-1 (425 aa).

Positions 1-22 are cleaved as a signal peptide; that stretch reads MAKLNPKFISLILFALVVIVSA. N59 is a glycosylation site (N-linked (GlcNAc...) asparagine). A disulfide bond links C108 and C140. Residues Y112, K114, Y131, and D138 each contribute to the an alpha-D-glucoside site. N154 carries an N-linked (GlcNAc...) asparagine glycan. 7 tandem repeats follow at residues 194–205, 213–224, 230–241, 248–259, 263–273, 277–287, and 291–301. Residues 194-259 form a 4 X approximate repeats region; the sequence is KQTGSLYSDW…DAKKPEDWDD (66 aa). Basic and acidic residues-rich tracts occupy residues 213–235 and 241–255; these read DPSA…EDTK and DIPK…KKPE. Residues 213–281 form a disordered region; that stretch reads DPSAKKPEDW…NPEYNGEWKP (69 aa). Residues 263 to 301 are 3 X approximate repeats; sequence GEWTAPTIPNPEYNGEWKPKKIKNPAYKGKWKAPMIDNP. An an alpha-D-glucoside-binding site is contributed by E321. The segment covering 348-378 has biased composition (basic and acidic residues); sequence EETWGKHKDAEKAAFDEAEKKREEEESKDAP. Positions 348–425 are disordered; sequence EETWGKHKDA…EETDAAHDEL (78 aa). Residues 379 to 398 are compositionally biased toward acidic residues; that stretch reads AESDAEEEAEDDDNEGDDSD. Phosphoserine is present on residues S381 and S397. An N-linked (GlcNAc...) asparagine glycan is attached at N399. Over residues 399 to 412 the composition is skewed to basic and acidic residues; the sequence is NESKSEETKEAEET. A Prevents secretion from ER motif is present at residues 422–425; it reads HDEL.

It belongs to the calreticulin family.

It localises to the endoplasmic reticulum lumen. Molecular calcium-binding chaperone promoting folding, oligomeric assembly and quality control in the ER via the calreticulin/calnexin cycle. This lectin may interact transiently with almost all of the monoglucosylated glycoproteins that are synthesized in the ER. In Arabidopsis thaliana (Mouse-ear cress), this protein is Calreticulin-1 (CRT1).